We begin with the raw amino-acid sequence, 116 residues long: Large ribosomal subunit protein bL19 (116 aa).

Belongs to the bacterial ribosomal protein bL19 family.

In terms of biological role, this protein is located at the 30S-50S ribosomal subunit interface and may play a role in the structure and function of the aminoacyl-tRNA binding site. The chain is Large ribosomal subunit protein bL19 (rplS) from Streptomyces lividans.